The primary structure comprises 1282 residues: MVRLREIPRTATFAWSPGAASPLIATGTRAGAVDADFSNETCLELWDLALGNEDAGAELQPVAKIDTDSGFNDLAWTDSEDNSRGIIAGGLESGSLGLWDADKLLSGASDAVLSKSSKHSGAIKALQFNPRHSSLLATGGAKGELYISDLNDLENPYRLGSSTARADDIECLDWNKKVAHILVTGSSAGFVTVWDVKTRKESLTLNNMGRKAVSAVAWDPTKPTKLVTATPHESDPIINLWDLRNSHAPERTLRGHEAGVLSLSWCNQDPDLLLSSGKDNRTICWNPQTGISYGEFPVVTNWTFQTRWNPRNPNFFATASFDGRISIQTIQNTSTETAKAVADQNQALDGEDFFAKAQSQPQVSSFSLPKAPKWLERPCSSTFGFGGRVVSVNLLEKGGRASKIKITPFEVDEAVGKSTETFESALKEGDLKSICENRITSAATEEEKSDWRVIDALLSDSPRKGLVEYLGFNDQAEDVSEGLAKLGLSKEDEVNGEAAPKESRRPGARKHKRLQSMFDASPDDNFLSDLAASKGAKTNNPFQIFNGEESEADKNITRALLLGDFEKALDHALKEDRMSDAFMIAIVGGQKCIEKAQEHYFSKQTESPNYVRLLASVVGKNLWDVVYNADLSNWKEIMVALCTFADEKDFADLCDALGDRLEEQIRNTGDKAIRKDASLCYLAGSKLEKVVSIWIEEQRENEQAAIETAAEDSSFSIHVRALQSLIEKVTIFRQVTKFEDSERTKDCDWKLSVLYDKYIEYADVVATHGRLQVAQKYLDLVPEKHPEAEIARNRIKLAMRQPTTRAQPATSTARVVSNKPLPQPAAYQPPTTFSAGARAATPTSYAPPAPAANPYAPPAAASNPYAPPVAASNPYAPTAAAANPYAPSAAAPSQSTNPYAPAGGSYAPAAGYQPRQQSFGAPPPSVGGVPPPPRASSQSPATVTTYTTAKNLPAWNDLPEGFAKQPVSRRGTPASSAPISSPFPNQSPAVSQGPPPAGAGPQRTPSVPPPPKGVPPPPRMTSPPSAGQAPPNPLSAVPPPPANPYAAVPQSPSVGSMAPPASIPRGSSPYNAPPTIPPPSNRYAPSPAAQAASPQLQARAPVPPPPQAAASPYAPPPPAQPLAANPYAPSTPPPMQPPLQQVPPPQSAGSRPSTASSVKKASPAPPKYPPGDRSHIPAEARPIFEILSEDMQRVKSRAPSSFKAQVDDAERRLNFLFDHLNNEDLLKPNTVQDMVQLARAIQARDYETARTIHIDIMTNRTDECGNWMVGVKRLISMSKVTP.

WD repeat units lie at residues 7–47 (IPRT…ELWD), 66–109 (DTDS…SGAS), 118–158 (KHSG…NPYR), 164–204 (ARAD…ESLT), 208–251 (MGRK…APER), 255–295 (GHEA…SYGE), and 298–338 (VVTN…TETA). Residues 382–407 (TFGFGGRVVSVNLLEKGGRASKIKIT) form a WD 8; interaction with sec13 repeat. Over residues 491–505 (EDEVNGEAAPKESRR) the composition is skewed to basic and acidic residues. Disordered stretches follow at residues 491 to 511 (EDEV…ARKH), 801 to 845 (QPTT…PTSY), and 906 to 1176 (YAPA…RSHI). The span at 801-815 (QPTTRAQPATSTARV) shows a compositional bias: polar residues. Pro residues predominate over residues 921 to 934 (APPPSVGGVPPPPR). The span at 973–992 (PASSAPISSPFPNQSPAVSQ) shows a compositional bias: low complexity. 3 stretches are compositionally biased toward pro residues: residues 1006–1021 (SVPP…PRMT), 1030–1043 (PPNP…PPAN), and 1071–1080 (NAPPTIPPPS). The span at 1084-1100 (APSPAAQAASPQLQARA) shows a compositional bias: low complexity. Pro residues-rich tracts occupy residues 1101 to 1120 (PVPP…PPAQ) and 1129 to 1146 (PSTP…PPPQ). Positions 1152–1162 (PSTASSVKKAS) are enriched in low complexity.

This sequence belongs to the WD repeat SEC31 family. The COPII coat is composed of at least 5 proteins: the sec23/24 complex, the sec13/31 complex, and the protein sar1. sec13 and sec31 make a 2:2 tetramer that forms the edge element of the COPII outer coat. The tetramer self-assembles in multiple copies to form the complete polyhedral cage. Interacts (via WD 8) with sec13.

It localises to the cytoplasmic vesicle. The protein resides in the COPII-coated vesicle membrane. Its subcellular location is the endoplasmic reticulum membrane. In terms of biological role, component of the coat protein complex II (COPII) which promotes the formation of transport vesicles from the endoplasmic reticulum (ER). The coat has two main functions, the physical deformation of the endoplasmic reticulum membrane into vesicles and the selection of cargo molecules. In Emericella nidulans (strain FGSC A4 / ATCC 38163 / CBS 112.46 / NRRL 194 / M139) (Aspergillus nidulans), this protein is Protein transport protein sec31 (sec31).